The primary structure comprises 210 residues: MSLVGGFPHHPVVHHDGYPFAAAAAAAASRCHEENPYFHGWLISHPEMSPPDYSMAPSYSPEYANGAAGLDHSHYGGVPGSGAGGLMQRPVKRRGTANRKERRRTISINSAFAELRECIPNVPADTKLSKIKTLRLATSYIAYLMDLLAKDDQNGETEAFKAEIKKTDVKEEKRKKELNELLKSTVCSNDKKTKGRTGWPQHVWALELKQ.

Residues 81 to 101 (SGAGGLMQRPVKRRGTANRKE) are disordered. Basic residues predominate over residues 90 to 101 (PVKRRGTANRKE). A bHLH domain is found at 92–144 (KRRGTANRKERRRTISINSAFAELRECIPNVPADTKLSKIKTLRLATSYIAYL).

Efficient DNA binding requires dimerization with another bHLH protein. As to expression, heart, liver and spleen.

The protein localises to the nucleus. Essential for cardiac morphogenesis and for the development of branchial arches. Binds DNA on E-box consensus sequence 5'-CANNTG-3'. The chain is Heart- and neural crest derivatives-expressed protein 2 (hand2) from Xenopus laevis (African clawed frog).